A 193-amino-acid polypeptide reads, in one-letter code: Large ribosomal subunit protein bL25 (193 aa).

It belongs to the bacterial ribosomal protein bL25 family. CTC subfamily. In terms of assembly, part of the 50S ribosomal subunit; part of the 5S rRNA/L5/L18/L25 subcomplex. Contacts the 5S rRNA. Binds to the 5S rRNA independently of L5 and L18.

Functionally, this is one of the proteins that binds to the 5S RNA in the ribosome where it forms part of the central protuberance. This chain is Large ribosomal subunit protein bL25, found in Hydrogenovibrio crunogenus (strain DSM 25203 / XCL-2) (Thiomicrospira crunogena).